The sequence spans 218 residues: Small ribosomal subunit protein uS3c (218 aa).

A KH type-2 domain is found at 47–117; it reads VRTHIRNSSN…KLKITLSEID (71 aa).

This sequence belongs to the universal ribosomal protein uS3 family. Part of the 30S ribosomal subunit.

It localises to the plastid. It is found in the chloroplast. In Spirogyra maxima (Green alga), this protein is Small ribosomal subunit protein uS3c (rps3).